The sequence spans 971 residues: MSTTSIQHFTSSFSPFSSGTQPVGMAQSQTVGLDTLAEGSQYALEQLQLSREANGASAVDGGVPNPLRSSISKPQGQQLYSDESSAQHTQNATTGFRNLPQRDQLAEARSTIRKSSNSGPVRRRISRACDQCNQLRTKCDGQNPCAHCIEFGLTCEYARERKKRGKASKKDLAAAAAAVANNGTAPTSNGNTSNDSVSSAKRHTPSDGQSTQEVSGRYDPNFDASRNLATAGQSQLGQHSDMSGMAGMQGSQQTPHSQPSLGGAIDAIHLNHFNTLNDSNRPQMSVPDLRSLQMLHPSGANTRSPSGALPPQGMNSGYNDGAYSLMNASEANHPSINQYRLGNSAENPPAPFLGLSPPAQSPGWLSLPSPSPANFASFSMPPFSSTLRYPVLQPVLPHIASIIPQSLACDLLDVYFTSFSPSHLSPQSPYVVGYIFRKQSFLHPTKPRVCSPGLLASMLWVAAQTSDAAFLTSPPSARGRVCQKLLELTVGLLRPLIHGPAPGETSPNYAANMVINGVALGGFGVSMDQLGAQSSATGAVDDVATYVHLATVISASEYKAASMRWWTAAWSLARELKLGRELPPNAPQPRQDGEPEDDTDVDMSKRNLPPLITSVGGNSGSTILNVTEEEREERRRLWWLLYATDRHLALCYNRPLTLLDKECEGLLQPMNDDLWQAGDFAGATYRQVGPQVECTGHSMFGFFLPLMTILGEIVDLQQAKEHPRFGRVFRNSADWDHQVLEITRQLDTYAQSLKEFEARYTSSLALGAGESEAAIEGSHLDHVSPSGRSTSTAGSRVNESIVHTKMVVAYGTHIMHVLHVLLAGKWDPINLLEDHDLWISSESFIAAMSHAVGAADAAADILEYDPDITFMPFFFGIYLLQGSFLLLLAADKLQGDVSPSVVRACETIVRAHEACVVTLNTEYQRTFRKVMRSALAQVRGRMPEDFGEQQQRRREVLALYRWTGDGSGLAL.

2 disordered regions span residues 1-25 (MSTTSIQHFTSSFSPFSSGTQPVGM) and 55-123 (GASA…PVRR). The span at 9-18 (FTSSFSPFSS) shows a compositional bias: low complexity. Polar residues predominate over residues 67–96 (LRSSISKPQGQQLYSDESSAQHTQNATTGF). The zn(2)-C6 fungal-type DNA-binding region spans 129–155 (CDQCNQLRTKCDGQNPCAHCIEFGLTC). Polar residues-rich tracts occupy residues 182–199 (NGTAPTSNGNTSNDSVSS), 227–241 (NLATAGQSQLGQHSD), and 249–260 (QGSQQTPHSQPS). Disordered stretches follow at residues 182–263 (NGTA…SLGG), 295–316 (LHPSGANTRSPSGALPPQGMNS), and 580–610 (RELPPNAPQPRQDGEPEDDTDVDMSKRNLPP).

This sequence belongs to the xlnR/xlr1 family.

It is found in the nucleus. In terms of biological role, transcriptional activator of the xylanolytic system. Involved in the regulation of extracellular cellulolytic and xylanolytic genes and in the regulation of the intracellular activities of D-xylose catabolic genes in the pentose catabolic pathway (PCP) in response to the presence of D-xylose. The polypeptide is Xylanolytic transcriptional activator xlnR (xlnR) (Aspergillus flavus (strain ATCC 200026 / FGSC A1120 / IAM 13836 / NRRL 3357 / JCM 12722 / SRRC 167)).